The chain runs to 123 residues: Fluoride-specific ion channel FluC (123 aa).

4 helical membrane-spanning segments follow: residues 4–24, 31–51, 64–83, and 100–120; these read VYIA…SGWV, ALPY…GLLM, IRMG…STFS, and ANIL…IFLA. Residues glycine 74 and threonine 77 each coordinate Na(+).

This sequence belongs to the fluoride channel Fluc/FEX (TC 1.A.43) family.

It is found in the cell inner membrane. It catalyses the reaction fluoride(in) = fluoride(out). With respect to regulation, na(+) is not transported, but it plays an essential structural role and its presence is essential for fluoride channel function. Fluoride-specific ion channel. Important for reducing fluoride concentration in the cell, thus reducing its toxicity. In Syntrophotalea carbinolica (strain DSM 2380 / NBRC 103641 / GraBd1) (Pelobacter carbinolicus), this protein is Fluoride-specific ion channel FluC.